Here is a 348-residue protein sequence, read N- to C-terminus: Ferrochelatase (348 aa).

Residues His-218 and Glu-299 each coordinate Fe cation.

The protein belongs to the ferrochelatase family.

The protein localises to the cytoplasm. The catalysed reaction is heme b + 2 H(+) = protoporphyrin IX + Fe(2+). The protein operates within porphyrin-containing compound metabolism; protoheme biosynthesis; protoheme from protoporphyrin-IX: step 1/1. Functionally, catalyzes the ferrous insertion into protoporphyrin IX. This chain is Ferrochelatase, found in Methylocella silvestris (strain DSM 15510 / CIP 108128 / LMG 27833 / NCIMB 13906 / BL2).